Reading from the N-terminus, the 205-residue chain is Large ribosomal subunit protein uL3 (205 aa).

Residues 126–150 (GGPKTHGQSDRHRAPGSISSTTTPG) form a disordered region.

The protein belongs to the universal ribosomal protein uL3 family. In terms of assembly, part of the 50S ribosomal subunit. Forms a cluster with proteins L14 and L19.

In terms of biological role, one of the primary rRNA binding proteins, it binds directly near the 3'-end of the 23S rRNA, where it nucleates assembly of the 50S subunit. In Dehalococcoides mccartyi (strain ATCC BAA-2266 / KCTC 15142 / 195) (Dehalococcoides ethenogenes (strain 195)), this protein is Large ribosomal subunit protein uL3.